The sequence spans 636 residues: Serine/threonine-protein kinase hal4 (636 aa).

Basic and acidic residues predominate over residues 1–11 (MGEKDKLHEIS). Disordered stretches follow at residues 1 to 167 (MGEK…AGVV) and 181 to 261 (AASP…PSSA). The segment covering 33–45 (EPPPPSSQQPPST) has biased composition (pro residues). 2 stretches are compositionally biased toward polar residues: residues 56 to 92 (ALKQ…QQPL) and 113 to 124 (NPSRHVSSTSNK). A compositionally biased stretch (low complexity) spans 140–155 (PSGSVPPSASVSRANS). A compositionally biased stretch (polar residues) spans 182–226 (ASPNPSTPSNGPAPVSTTATPSRNPVTRLQRIFSQNSVSRQNSRT). At serine 218 the chain carries Phosphoserine. Residues 234 to 261 (NTEETNSTGGSETGGAANSSSTSNPSSA) are compositionally biased toward low complexity. A phosphothreonine mark is found at threonine 238 and threonine 241. Serine 299 is modified (phosphoserine). The region spanning 351–623 (GRCQEVIGRG…AKQIMKSEWV (273 aa)) is the Protein kinase domain. Residues 357 to 365 (IGRGAFGVV) and lysine 385 contribute to the ATP site. Residue aspartate 481 is the Proton acceptor of the active site.

It belongs to the protein kinase superfamily. Ser/Thr protein kinase family. As to quaternary structure, interacts with sty1.

The protein localises to the cytoplasm. The enzyme catalyses L-seryl-[protein] + ATP = O-phospho-L-seryl-[protein] + ADP + H(+). It catalyses the reaction L-threonyl-[protein] + ATP = O-phospho-L-threonyl-[protein] + ADP + H(+). In terms of biological role, promotes K(+) uptake, by the potassium transporter trk1-trk2, which leads to the subsequent cellular resistance to toxic cations such as Na(+), Li(+) and Ca(2+). This is Serine/threonine-protein kinase hal4 (hal4) from Schizosaccharomyces pombe (strain 972 / ATCC 24843) (Fission yeast).